The sequence spans 362 residues: Porin Omp2b (362 aa).

A signal peptide spans 1 to 22; sequence MNIKSLLLGSAAALVAASGAQA.

The protein belongs to the alphaproteobacteria porin family. As to quaternary structure, homotrimer.

It localises to the cell outer membrane. In terms of biological role, forms passive diffusion pores that allow small molecular weight hydrophilic materials across the outer membrane. The chain is Porin Omp2b (omp2b) from Brucella melitensis biotype 1 (strain ATCC 23456 / CCUG 17765 / NCTC 10094 / 16M).